Here is a 150-residue protein sequence, read N- to C-terminus: 16 kDa phloem protein 1 (150 aa).

A C2 domain is found at Met-1–Ser-108. 5 residues coordinate Ca(2+): Asp-20, Asp-27, Asp-78, Asp-80, and Asp-86.

It depends on Ca(2+) as a cofactor. In terms of tissue distribution, sieve elements of leaves, stems, roots and flowers.

In terms of biological role, binds to both sense and antisense RNA. Interacts with mesophyll plasmodesmata to mediate its own cell-to-cell transport and potentiate RNA trafficking. This is 16 kDa phloem protein 1 (PP16-1) from Cucurbita maxima (Pumpkin).